The following is a 223-amino-acid chain: Pre-protein VI (223 aa).

A propeptide spanning residues 1–28 is cleaved from the precursor; that stretch reads MDYAALSPHLGGWALRDHHIGDSSLRGG. The interval 29 to 53 is amphipathic alpha-helix essential for membrane lytic activity; it reads AINWGNLGSRITSALNSTGRWLYNT. The interval 31–52 is involved in endosomal membrane lysis; that stretch reads NWGNLGSRITSALNSTGRWLYN. An interaction with hexon protein region spans residues 47-73; sequence GRWLYNTGNRFVHSNTFNQIKQGIQDS. A Nuclear export signal motif is present at residues 66 to 75; sequence IKQGIQDSGV. Disordered stretches follow at residues 136–155 and 166–203; these read EPPA…PTTR and PPVT…GQWR. Pro residues predominate over residues 138-151; that stretch reads PAAPAAPAPAPPLV. A compositionally biased stretch (low complexity) spans 166 to 182; it reads PPVTSSAPAVPVDVPTT. Positions 189 to 198 are enriched in basic residues; that stretch reads PPKRRRKRAR. The Nuclear export signal signature appears at 204 to 215; it reads ARLDSLSGTGVA. The segment at 206-212 is interaction with hexon protein; sequence LDSLSGT. The interval 213-223 is binds to importin alpha/beta, involved in hexon nuclear import; that stretch reads GVATATRRMCY.

The protein belongs to the adenoviridae protein VI family. In terms of assembly, interacts with hexon protein; this interaction allows nuclear import of hexon trimers and possibly pre-capsid assembly. Interacts (via C-terminal NLS) with importin alpha/beta. As to quaternary structure, interacts (via PPxY motif) with host NEDD4 ubiquitine ligase; this interaction might play a role in virus intracellular transport during entry. Part of a complex composed of the core-capsid bridging protein, the endosome lysis protein VI and the hexon-linking protein VIII; these interactions bridge the virus core to the capsid. Interacts with peripentonal hexons; this interaction stabilizes the capsid by gluing two peripentonal hexons together and joining them with an adjacent group-of-nine hexon. Heterodimer with the viral protease; disulfide-linked. Interacts with the viral protease. Ubiquitinated by Nedd4 following partial capsid disassembly; which might play a role in intracellular virus movement during entry. Post-translationally, contains the major nuclear import and export signals. Proteolytically removed during virion maturation. The processing of the C-terminus turns the precursor into a mature viral structural protein and abrogates its ability to promote hexon import and act as a potential chaperone protein.

It is found in the host nucleus. The protein resides in the host cytoplasm. The protein localises to the virion. Functionally, during virus assembly, promotes hexon trimers nuclear import through nuclear pore complexes via an importin alpha/beta-dependent mechanism. By analogy to herpesviruses capsid assembly, might act as a chaperone to promote the formation of the icosahedral capsid. Its function is as follows. Structural component of the virion that provides increased stability to the particle shell through its interaction with the core-capsid bridging protein and the hexon-linking protein VIII. Fibers shedding during virus entry into host cell allows the endosome lysis protein to be exposed as a membrane-lytic peptide. Exhibits pH-independent membrane fragmentation activity and probably mediates viral rapid escape from host endosome via organellar membrane lysis. It is not clear if it then remains partially associated with the capsid and involved in the intracellular microtubule-dependent transport of capsid to the nucleus, or if it is lost during endosomal penetration. Cofactor that activates the viral protease. Binds to viral protease in a 1:1 ratio. This chain is Pre-protein VI, found in Fowl adenovirus A serotype 1 (strain CELO / Phelps) (FAdV-1).